Reading from the N-terminus, the 361-residue chain is Anhydro-N-acetylmuramic acid kinase (361 aa).

10–17 serves as a coordination point for ATP; that stretch reads GTSLDGVD.

It belongs to the anhydro-N-acetylmuramic acid kinase family.

The catalysed reaction is 1,6-anhydro-N-acetyl-beta-muramate + ATP + H2O = N-acetyl-D-muramate 6-phosphate + ADP + H(+). The protein operates within amino-sugar metabolism; 1,6-anhydro-N-acetylmuramate degradation. It participates in cell wall biogenesis; peptidoglycan recycling. Catalyzes the specific phosphorylation of 1,6-anhydro-N-acetylmuramic acid (anhMurNAc) with the simultaneous cleavage of the 1,6-anhydro ring, generating MurNAc-6-P. Is required for the utilization of anhMurNAc either imported from the medium or derived from its own cell wall murein, and thus plays a role in cell wall recycling. This Gluconobacter oxydans (strain 621H) (Gluconobacter suboxydans) protein is Anhydro-N-acetylmuramic acid kinase.